A 301-amino-acid chain; its full sequence is uncharacterized protein (301 aa).

Residues 1-58 (MDIRHLTYFLEVARLKSFTKASQSLYVSQPTISKMIKNLEEELGIELFYRNGRQVELT) enclose the HTH lysR-type domain. Positions 18 to 37 (FTKASQSLYVSQPTISKMIK) form a DNA-binding region, H-T-H motif.

This sequence belongs to the LysR transcriptional regulatory family.

This is an uncharacterized protein from Bacillus subtilis (strain 168).